Consider the following 225-residue polypeptide: NAD(P)H-quinone oxidoreductase subunit K, chloroplastic (225 aa).

Cysteine 43, cysteine 44, cysteine 108, and cysteine 139 together coordinate [4Fe-4S] cluster.

It belongs to the complex I 20 kDa subunit family. As to quaternary structure, NDH is composed of at least 16 different subunits, 5 of which are encoded in the nucleus. [4Fe-4S] cluster serves as cofactor.

It is found in the plastid. The protein localises to the chloroplast thylakoid membrane. The enzyme catalyses a plastoquinone + NADH + (n+1) H(+)(in) = a plastoquinol + NAD(+) + n H(+)(out). It carries out the reaction a plastoquinone + NADPH + (n+1) H(+)(in) = a plastoquinol + NADP(+) + n H(+)(out). Its function is as follows. NDH shuttles electrons from NAD(P)H:plastoquinone, via FMN and iron-sulfur (Fe-S) centers, to quinones in the photosynthetic chain and possibly in a chloroplast respiratory chain. The immediate electron acceptor for the enzyme in this species is believed to be plastoquinone. Couples the redox reaction to proton translocation, and thus conserves the redox energy in a proton gradient. This chain is NAD(P)H-quinone oxidoreductase subunit K, chloroplastic, found in Nandina domestica (Heavenly bamboo).